The sequence spans 271 residues: NH(3)-dependent NAD(+) synthetase (271 aa).

ATP is bound at residue Gly43–Ser50. Position 49 (Asp49) interacts with Mg(2+). Arg136 contributes to the deamido-NAD(+) binding site. Thr156 contacts ATP. Glu161 contributes to the Mg(2+) binding site. The deamido-NAD(+) site is built by Lys169 and Asp176. Positions 185 and 207 each coordinate ATP. His256–Lys257 serves as a coordination point for deamido-NAD(+).

The protein belongs to the NAD synthetase family. Homodimer.

The enzyme catalyses deamido-NAD(+) + NH4(+) + ATP = AMP + diphosphate + NAD(+) + H(+). Its pathway is cofactor biosynthesis; NAD(+) biosynthesis; NAD(+) from deamido-NAD(+) (ammonia route): step 1/1. Its function is as follows. Catalyzes the ATP-dependent amidation of deamido-NAD to form NAD. Uses ammonia as a nitrogen source. The sequence is that of NH(3)-dependent NAD(+) synthetase from Tropheryma whipplei (strain TW08/27) (Whipple's bacillus).